Consider the following 204-residue polypeptide: Guanylate kinase (204 aa).

The 180-residue stretch at 5 to 184 folds into the Guanylate kinase-like domain; that stretch reads GLLIVLSGPS…AVQRIKDIIA (180 aa). An ATP-binding site is contributed by 12 to 19; that stretch reads GPSGVGKG.

This sequence belongs to the guanylate kinase family.

The protein resides in the cytoplasm. It carries out the reaction GMP + ATP = GDP + ADP. Functionally, essential for recycling GMP and indirectly, cGMP. The chain is Guanylate kinase from Enterococcus faecalis (strain ATCC 700802 / V583).